Reading from the N-terminus, the 141-residue chain is Ribonuclease VapC16 (141 aa).

Residue D99 participates in Mg(2+) binding. The segment at D99–L141 is disordered.

It belongs to the PINc/VapC protein family. Mg(2+) is required as a cofactor.

Functionally, toxic component of a type II toxin-antitoxin (TA) system. An RNase. The cognate antitoxin is VapB16. The sequence is that of Ribonuclease VapC16 from Mycobacterium tuberculosis (strain ATCC 25618 / H37Rv).